Reading from the N-terminus, the 510-residue chain is MSVRPTEITEILKQQIEQYGSRMVVTNVGYVVQVGDGIATVHGLRDVMASELVEFENGVLGIAFNLQEDSVGVIILGDYTGIEEGDEVRATGRIASVPVGPALVGRVVNALGEPIDGKGPINTDKFRPIERIAPGVVMRQDVDTALQTGIKAIDSMIPIGRGQRELIIGDRQTGKTAIAIDTIINQKGKGVICIYVAIGQKRAQVAQTVATLERYGAMEHTIVVAATASDPAALQYIAPYAGCAMGEEIMESGGHALIVYDDLSKHAWAYRQVSLLMRRPPGREAYPGDIFYLHSRLLERAARLRDDLGGGTLTALPIVETQANDVSAYIPTNVISITDGQIYLEPDLFYAGIRPAINVGLSVSRVGGAAQIRAMRQVAGRLRLELAQFRELAAFAQFAAELDPATKRQIDRGLRLTEVLKQPQYEPMPVEEQVAIIWVATNGYLDDVLVEHVREFEKQYLDYLRTSHPQILQRIASERELKDDLIQQLHEVTRAFKQSIWAPPQERVII.

169-176 (GDRQTGKT) is an ATP binding site.

Belongs to the ATPase alpha/beta chains family. As to quaternary structure, F-type ATPases have 2 components, CF(1) - the catalytic core - and CF(0) - the membrane proton channel. CF(1) has five subunits: alpha(3), beta(3), gamma(1), delta(1), epsilon(1). CF(0) has three main subunits: a(1), b(2) and c(9-12). The alpha and beta chains form an alternating ring which encloses part of the gamma chain. CF(1) is attached to CF(0) by a central stalk formed by the gamma and epsilon chains, while a peripheral stalk is formed by the delta and b chains.

Its subcellular location is the cell membrane. The enzyme catalyses ATP + H2O + 4 H(+)(in) = ADP + phosphate + 5 H(+)(out). Produces ATP from ADP in the presence of a proton gradient across the membrane. The alpha chain is a regulatory subunit. The polypeptide is ATP synthase subunit alpha (Thermomicrobium roseum (strain ATCC 27502 / DSM 5159 / P-2)).